The chain runs to 241 residues: MFLEKEQDNLDNLKTQTKELHKDYTECQNCQKEETQTTNKDNQKEDETFKNQPNKTKQTNTKQQKHLSKESSHQQITKLQTQIKELQQKLSQQKKTFDEGLLKNQAEFINFKKRAQTQKENELKYASSNFINNLLMPLEQLEKVIDMPTQNELLQKYLLGFKLLQKQIKKVLQDEGVEEIEALNKPFDPTFHHALETVCDFEKPDKTNLAVLQKGYLYKKRILRPTLVKVNEWSDKNEKNE.

Positions 28 to 49 are enriched in basic and acidic residues; the sequence is QNCQKEETQTTNKDNQKEDETF. A disordered region spans residues 28-78; sequence QNCQKEETQTTNKDNQKEDETFKNQPNKTKQTNTKQQKHLSKESSHQQITK. The segment covering 50 to 62 has biased composition (low complexity); that stretch reads KNQPNKTKQTNTK.

It belongs to the GrpE family. In terms of assembly, homodimer.

It localises to the cytoplasm. Its function is as follows. Participates actively in the response to hyperosmotic and heat shock by preventing the aggregation of stress-denatured proteins, in association with DnaK and GrpE. It is the nucleotide exchange factor for DnaK and may function as a thermosensor. Unfolded proteins bind initially to DnaJ; upon interaction with the DnaJ-bound protein, DnaK hydrolyzes its bound ATP, resulting in the formation of a stable complex. GrpE releases ADP from DnaK; ATP binding to DnaK triggers the release of the substrate protein, thus completing the reaction cycle. Several rounds of ATP-dependent interactions between DnaJ, DnaK and GrpE are required for fully efficient folding. This chain is Protein GrpE, found in Aster yellows witches'-broom phytoplasma (strain AYWB).